The primary structure comprises 484 residues: MITIDKILEILKNDHNFREILFHEHYYYNWTQNVTFNALSYDSRQISSDTLFFAKGATFKKEYLDSAITAGLSFYVSEIDYGADIPVILVNDIKKAMSLISMSFYNNPQNKLKLLAFTGTKGKTTAAYFAYHMLKVNHRPAMLSTMNTTLDGKSFFKSHLTTPESLDLFRMMATAVENQMTHLVMEVSSQAYLTKRVYGLTFDVGVFLNISPDHIGPIEHPTFEDYFFHKRLLMENSNAVVVNSQMDHFNIVKEQVEYIPHDFYGDYSENVITESQAFSFHVKGKLENTYDIKLIGKFNQENAIAAGLACLRLGVSIEDIKNGIAQTTVPGRMEVLTQTNGAKIFVDYAHNGDSLKKLLAVVEEHQKGDIILVLGAPGNKGQSRRKDFGDVINQHPNLQVILTADDPNFEDPLVISQEIASHINRPVTIIIDREEAIANASTLTNCKLDAIIIAGKGADAYQIIKGNHDNYSGDLEVAKKYLKR.

Residue Ser43 participates in UDP-N-acetyl-alpha-D-muramoyl-L-alanyl-D-glutamate binding. ATP is bound at residue 119-125 (GTKGKTT). UDP-N-acetyl-alpha-D-muramoyl-L-alanyl-D-glutamate contacts are provided by residues 161–162 (TT), Ser188, and Arg196. Lys230 carries the post-translational modification N6-carboxylysine. The short motif at 405–408 (DDPN) is the L-lysine recognition motif element.

Belongs to the MurCDEF family. MurE subfamily. Post-translationally, carboxylation is probably crucial for Mg(2+) binding and, consequently, for the gamma-phosphate positioning of ATP.

It is found in the cytoplasm. The enzyme catalyses UDP-N-acetyl-alpha-D-muramoyl-L-alanyl-D-glutamate + L-lysine + ATP = UDP-N-acetyl-alpha-D-muramoyl-L-alanyl-gamma-D-glutamyl-L-lysine + ADP + phosphate + H(+). It participates in cell wall biogenesis; peptidoglycan biosynthesis. In terms of biological role, catalyzes the addition of L-lysine to the nucleotide precursor UDP-N-acetylmuramoyl-L-alanyl-D-glutamate (UMAG) in the biosynthesis of bacterial cell-wall peptidoglycan. The protein is UDP-N-acetylmuramoyl-L-alanyl-D-glutamate--L-lysine ligase of Streptococcus agalactiae serotype Ia (strain ATCC 27591 / A909 / CDC SS700).